Consider the following 701-residue polypeptide: Elongation factor G 2 (701 aa).

Positions 8–290 (ERYRNIGISA…AVIDYLPSPA (283 aa)) constitute a tr-type G domain. Residues 17-24 (AHIDAGKT), 88-92 (DTPGH), and 142-145 (NKMD) each bind GTP.

This sequence belongs to the TRAFAC class translation factor GTPase superfamily. Classic translation factor GTPase family. EF-G/EF-2 subfamily.

The protein localises to the cytoplasm. Its function is as follows. Catalyzes the GTP-dependent ribosomal translocation step during translation elongation. During this step, the ribosome changes from the pre-translocational (PRE) to the post-translocational (POST) state as the newly formed A-site-bound peptidyl-tRNA and P-site-bound deacylated tRNA move to the P and E sites, respectively. Catalyzes the coordinated movement of the two tRNA molecules, the mRNA and conformational changes in the ribosome. This Cupriavidus pinatubonensis (strain JMP 134 / LMG 1197) (Cupriavidus necator (strain JMP 134)) protein is Elongation factor G 2.